A 312-amino-acid chain; its full sequence is Ribosomal protein L11 methyltransferase (312 aa).

The S-adenosyl-L-methionine site is built by threonine 160, glycine 181, aspartate 203, and asparagine 246.

The protein belongs to the methyltransferase superfamily. PrmA family.

It is found in the cytoplasm. It catalyses the reaction L-lysyl-[protein] + 3 S-adenosyl-L-methionine = N(6),N(6),N(6)-trimethyl-L-lysyl-[protein] + 3 S-adenosyl-L-homocysteine + 3 H(+). Its function is as follows. Methylates ribosomal protein L11. This chain is Ribosomal protein L11 methyltransferase, found in Staphylococcus aureus (strain JH1).